A 293-amino-acid polypeptide reads, in one-letter code: Light-independent protochlorophyllide reductase iron-sulfur ATP-binding protein (293 aa).

ATP-binding positions include 10–15 (GIGKST) and lysine 39. Position 14 (serine 14) interacts with Mg(2+). [4Fe-4S] cluster-binding residues include cysteine 95 and cysteine 129. 180 to 181 (NR) lines the ATP pocket.

Belongs to the NifH/BchL/ChlL family. Homodimer. Protochlorophyllide reductase is composed of three subunits; ChlL, ChlN and ChlB. [4Fe-4S] cluster is required as a cofactor.

The protein localises to the plastid. The protein resides in the chloroplast. It carries out the reaction chlorophyllide a + oxidized 2[4Fe-4S]-[ferredoxin] + 2 ADP + 2 phosphate = protochlorophyllide a + reduced 2[4Fe-4S]-[ferredoxin] + 2 ATP + 2 H2O. Its pathway is porphyrin-containing compound metabolism; chlorophyll biosynthesis (light-independent). Component of the dark-operative protochlorophyllide reductase (DPOR) that uses Mg-ATP and reduced ferredoxin to reduce ring D of protochlorophyllide (Pchlide) to form chlorophyllide a (Chlide). This reaction is light-independent. The L component serves as a unique electron donor to the NB-component of the complex, and binds Mg-ATP. The protein is Light-independent protochlorophyllide reductase iron-sulfur ATP-binding protein of Adiantum capillus-veneris (Maidenhair fern).